The chain runs to 344 residues: MVSSNGSQCPYDDSFKYTLYGCMFSMVFVLGLISNCVAIYIFICALKVRNETTTYMINLAMSDLLFVFTLPFRIFYFATRNWPFGDLLCKISVMLFYTNMYGSILFLTCISVDRFLAIVYPFKSKTLRTKRNAKIVCIAVWFTVMGGSAPAVFFQSTHSQGNNTSEACFENFPAATWKTYLSRIVIFIEIVGFFIPLILNVTCSSMVLRTLNKPVTLSRSKMNKTKVLKMIFVHLVIFCFCFVPYNINLILYSLMRTQTFVNCSVVAAVRTMYPITLCIAVSNCCFDPIVYYFTSDTIQNSIKMKNWSVRRSDSRFSEVQGTENFIQHNLQTLKNKIFDNESAI.

Residues 1–25 lie on the Extracellular side of the membrane; it reads MVSSNGSQCPYDDSFKYTLYGCMFS. Asparagine 5 carries an N-linked (GlcNAc...) asparagine glycan. The chain crosses the membrane as a helical span at residues 26 to 46; that stretch reads MVFVLGLISNCVAIYIFICAL. The Cytoplasmic segment spans residues 47–56; it reads KVRNETTTYM. A helical membrane pass occupies residues 57–77; it reads INLAMSDLLFVFTLPFRIFYF. Residues 78-90 are Extracellular-facing; the sequence is ATRNWPFGDLLCK. Cysteine 89 and cysteine 168 form a disulfide bridge. Residues 91 to 111 form a helical membrane-spanning segment; the sequence is ISVMLFYTNMYGSILFLTCIS. Topologically, residues 112 to 134 are cytoplasmic; sequence VDRFLAIVYPFKSKTLRTKRNAK. Residues 135-155 traverse the membrane as a helical segment; it reads IVCIAVWFTVMGGSAPAVFFQ. Residues 156–183 lie on the Extracellular side of the membrane; that stretch reads STHSQGNNTSEACFENFPAATWKTYLSR. Residues asparagine 162 and asparagine 163 are each glycosylated (N-linked (GlcNAc...) asparagine). A helical membrane pass occupies residues 184-204; it reads IVIFIEIVGFFIPLILNVTCS. The Cytoplasmic portion of the chain corresponds to 205-230; it reads SMVLRTLNKPVTLSRSKMNKTKVLKM. The helical transmembrane segment at 231 to 251 threads the bilayer; it reads IFVHLVIFCFCFVPYNINLIL. Residues 252-272 lie on the Extracellular side of the membrane; sequence YSLMRTQTFVNCSVVAAVRTM. The N-linked (GlcNAc...) asparagine glycan is linked to asparagine 262. Residues 273–293 traverse the membrane as a helical segment; that stretch reads YPITLCIAVSNCCFDPIVYYF. Cysteine 284 carries S-palmitoyl cysteine lipidation. Residues 294-344 are Cytoplasmic-facing; that stretch reads TSDTIQNSIKMKNWSVRRSDSRFSEVQGTENFIQHNLQTLKNKIFDNESAI.

This sequence belongs to the G-protein coupled receptor 1 family. As to expression, ubiquitously expressed. Detected in the hair follicles and skin (at protein level).

The protein resides in the cell membrane. In terms of biological role, binds to oleoyl-L-alpha-lysophosphatidic acid (LPA). Intracellular cAMP is involved in the receptor activation. Important for the maintenance of hair growth and texture. This chain is Lysophosphatidic acid receptor 6 (Lpar6), found in Mus musculus (Mouse).